The sequence spans 160 residues: Na(+)/H(+) antiporter subunit E1 (160 aa).

4 consecutive transmembrane segments (helical) span residues 1–21, 27–47, 49–69, and 101–121; these read MAIQILVNLILSVFWLFVTGS, FILGYLFALLLVYIMRGVLPG, FYLITVYKIIKLFLVFLIELI, and WQIVLLSNLITLTPGTIVLGI.

This sequence belongs to the CPA3 antiporters (TC 2.A.63) subunit E family. May form a heterooligomeric complex that consists of seven subunits: mnhA1, mnhB1, mnhC1, mnhD1, mnhE1, mnhF1 and mnhG1.

The protein resides in the cell membrane. Functionally, mnh complex is a Na(+)/H(+) antiporter involved in Na(+) excretion. This is Na(+)/H(+) antiporter subunit E1 (mnhE1) from Staphylococcus saprophyticus subsp. saprophyticus (strain ATCC 15305 / DSM 20229 / NCIMB 8711 / NCTC 7292 / S-41).